A 338-amino-acid polypeptide reads, in one-letter code: DNA-directed RNA polymerase subunit alpha (338 aa).

The alpha N-terminal domain (alpha-NTD) stretch occupies residues 1–225 (MLISQRPTIT…ELFGLARELN (225 aa)). Residues 242-338 (YIAAYSMPIE…YIDVEAEDSE (97 aa)) are alpha C-terminal domain (alpha-CTD). The tract at residues 319 to 338 (LEGYDAETGGYIDVEAEDSE) is disordered.

Belongs to the RNA polymerase alpha chain family. In terms of assembly, homodimer. The RNAP catalytic core consists of 2 alpha, 1 beta, 1 beta' and 1 omega subunit. When a sigma factor is associated with the core the holoenzyme is formed, which can initiate transcription.

It catalyses the reaction RNA(n) + a ribonucleoside 5'-triphosphate = RNA(n+1) + diphosphate. Functionally, DNA-dependent RNA polymerase catalyzes the transcription of DNA into RNA using the four ribonucleoside triphosphates as substrates. This chain is DNA-directed RNA polymerase subunit alpha, found in Corynebacterium glutamicum (strain ATCC 13032 / DSM 20300 / JCM 1318 / BCRC 11384 / CCUG 27702 / LMG 3730 / NBRC 12168 / NCIMB 10025 / NRRL B-2784 / 534).